The following is a 161-amino-acid chain: MSIVKEFREFIARGNVVDLAVGVIIGAAFNGIVKSLVDGVIMPPIGLVTGGLDFSKLQWVLKPEDPVTEAVELVAIQYGAFINTVIQFLIVAVVVFLLVKLVNHIRRADAAEPAPEAPAAPTPEERLLTEIRDLLAKPATVTAAPKAAAAPVAKPKTKPKA.

A run of 2 helical transmembrane segments spans residues 21-41 and 79-99; these read VGVI…DGVI and GAFI…FLLV. Positions 142 to 154 are enriched in low complexity; sequence TAAPKAAAAPVAK. The segment at 142 to 161 is disordered; the sequence is TAAPKAAAAPVAKPKTKPKA.

It belongs to the MscL family. As to quaternary structure, homopentamer.

It localises to the cell inner membrane. Channel that opens in response to stretch forces in the membrane lipid bilayer. May participate in the regulation of osmotic pressure changes within the cell. In Caulobacter sp. (strain K31), this protein is Large-conductance mechanosensitive channel.